We begin with the raw amino-acid sequence, 755 residues long: Polyribonucleotide nucleotidyltransferase (755 aa).

2 residues coordinate Mg(2+): D493 and D499. In terms of domain architecture, KH spans 560 to 619 (PRIMTIQIPVDKIGALIGPGGKTIRNICDTTGAQIDIEDDGRVFITAPDGEAAKKAISMI). An S1 motif domain is found at 629–698 (GDIFLGKVVS…NTGKISLSRR (70 aa)). The segment at 704–755 (ETPEARKAAGAAPRPRPREEQRGGREEPRSLREELRGPRRDGERPRPRRRDD) is disordered. Positions 719 to 755 (RPREEQRGGREEPRSLREELRGPRRDGERPRPRRRDD) are enriched in basic and acidic residues.

It belongs to the polyribonucleotide nucleotidyltransferase family. Requires Mg(2+) as cofactor.

The protein localises to the cytoplasm. The enzyme catalyses RNA(n+1) + phosphate = RNA(n) + a ribonucleoside 5'-diphosphate. Functionally, involved in mRNA degradation. Catalyzes the phosphorolysis of single-stranded polyribonucleotides processively in the 3'- to 5'-direction. This is Polyribonucleotide nucleotidyltransferase from Chloroflexus aggregans (strain MD-66 / DSM 9485).